Here is an 812-residue protein sequence, read N- to C-terminus: Mitochondrial intermediate peptidase (812 aa).

The transit peptide at 1–29 (MRLSRQLLRSTPFLTRAKPVSGKVSHFRS) directs the protein to the mitochondrion. The segment at 19–49 (PVSGKVSHFRSRTDLKGGSSNSSKSPDSVGD) is disordered. Over residues 37–46 (SSNSSKSPDS) the composition is skewed to low complexity. H595 lines the Zn(2+) pocket. E596 is an active-site residue. Residues H599 and H602 each contribute to the Zn(2+) site.

This sequence belongs to the peptidase M3 family. It depends on Zn(2+) as a cofactor.

Its subcellular location is the mitochondrion matrix. The catalysed reaction is Release of an N-terminal octapeptide as second stage of processing of some proteins imported into the mitochondrion.. Functionally, cleaves proteins, imported into the mitochondrion, to their mature size. While most mitochondrial precursor proteins are processed to the mature form in one step by mitochondrial processing peptidase (MPP), the sequential cleavage by MIP of an octapeptide after initial processing by MPP is a required step for a subgroup of nuclear-encoded precursor proteins destined for the matrix or the inner membrane. This Scheffersomyces stipitis (strain ATCC 58785 / CBS 6054 / NBRC 10063 / NRRL Y-11545) (Yeast) protein is Mitochondrial intermediate peptidase (OCT1).